Here is a 326-residue protein sequence, read N- to C-terminus: NAD-dependent protein deacylase SIR5 (326 aa).

A mitochondrion-targeting transit peptide spans 1 to 26 (MRLLRPTPRLSSIFSSKTATSNLRFF). Residues 28–324 (AMAPHNDVGA…IGKLETDKKE (297 aa)) form the Deacetylase sirtuin-type domain. 53 to 72 (GAGLSASSGLPTFRGAGGLW) is an NAD(+) binding site. Positions 97 and 100 each coordinate substrate. Catalysis depends on H151, which acts as the Proton acceptor. Zn(2+) is bound by residues C159, C162, C211, and C214.

It belongs to the sirtuin family. Class I subfamily. As to quaternary structure, interacts with LAT1; the interaction is direct. Requires Zn(2+) as cofactor.

Its subcellular location is the mitochondrion. The protein resides in the cytoplasm. The protein localises to the cytosol. It localises to the nucleus. It is found in the chromosome. It catalyses the reaction N(6)-acetyl-L-lysyl-[protein] + NAD(+) + H2O = 2''-O-acetyl-ADP-D-ribose + nicotinamide + L-lysyl-[protein]. The catalysed reaction is N(6)-(2E)-butenoyl-L-lysyl-[protein] + H2O = (2E)-2-butenoate + L-lysyl-[protein]. Its function is as follows. NAD-dependent protein-lysine deacylase that decrotonylates the PDC (pyruvate dehydrogenase complex) subunit LAT1 at 'Lys-148' to inhibit PDC activity and consequently ATP production. Also decrotonylates histone H3 crotonylated at 'Lys-18' (H3K18cr), to repress the expression of genes involved in aerobic respiration. May also act as a NAD-dependent deacetylase. Does not mediate desuccinylation, demalonylation, or deglutarylation of LAT1. In Fusarium oxysporum f. sp. lycopersici (strain 4287 / CBS 123668 / FGSC 9935 / NRRL 34936) (Fusarium vascular wilt of tomato), this protein is NAD-dependent protein deacylase SIR5.